Here is a 265-residue protein sequence, read N- to C-terminus: MPEKINYENLKPSEARQLIREGVLTGPTAGIALGYTQANLVMLPKELAYDFLLFAFRNPKPCPILDVTDVGSPEPKGVAKGADLRTDIPKYRIYKKGVLEAEVNDIRDYWRDDFVAFLLGCSFTFEKALLENDIPVRHIEEGKNVPMYITNIETRPAGIFHGYMVVSMRPIPQNLVVRAVQVTSRFPSVHGAPVHIGDPKAIGIASLDKPDFGDPVEIKAGEVPVFWACGVTPQAVAMKSKPEIMITHSPGHMFITDLKDEMLAC.

The protein belongs to the D-glutamate cyclase family.

The protein is Putative hydro-lyase Teth514_1597 of Thermoanaerobacter sp. (strain X514).